We begin with the raw amino-acid sequence, 422 residues long: Cyclin-A2 (422 aa).

Met-1 carries the post-translational modification N-acetylmethionine. Residues 1-62 (MPGTSRHSGR…APQQKLKTRR (62 aa)) form a disordered region. Position 5 is a phosphoserine (Ser-5).

The protein belongs to the cyclin family. Cyclin AB subfamily. Interacts with the CDK1 and CDK2 protein kinases to form serine/threonine kinase holoenzyme complexes. Interacts with CDK1 (hyperphosphorylated form in G1 and underphosphorylated forms in S and G2). Interacts with CDK2; the interaction increases from G1 to G2. Interacts (associated with CDK2 but not with CDK1) with SCAPER; regulates the activity of CCNA2/CDK2 by transiently maintaining CCNA2 in the cytoplasm. Forms a ternary complex with CDK2 and CDKN1B; CDKN1B inhibits the kinase activity of CDK2 through conformational rearrangements. Interacts with INCA1. As to quaternary structure, (Microbial infection) Interacts with mouse cytomegalovirus/MCMV kinase M97; this interaction sequesters CCNA2 to the cytoplasm. In terms of processing, polyubiquitinated via 'Lys-11'-linked ubiquitin by the anaphase-promoting complex (APC/C), leading to its degradation by the proteasome. Deubiquitinated and stabilized by USP37 enables entry into S phase. Ubiquitinated during the G1 phase by the SCF(FBXO31) complex, leading to its proteasomal degradation. Ubiquitous. In the testis, expressed in germ cells and in the ovary, in both germline and somatic cells.

Its subcellular location is the nucleus. The protein localises to the cytoplasm. Its function is as follows. Cyclin which controls both the G1/S and the G2/M transition phases of the cell cycle. Functions through the formation of specific serine/threonine kinase holoenzyme complexes with the cyclin-dependent protein kinases CDK1 and CDK2. The cyclin subunit confers the substrate specificity of these complexes and differentially interacts with and activates CDK1 and CDK2 throughout the cell cycle. The sequence is that of Cyclin-A2 from Mus musculus (Mouse).